The chain runs to 548 residues: Chaperonin GroEL (548 aa).

Residues 30 to 33 (TLGP), Lys51, 87 to 91 (DGTTT), Gly415, and Asp495 each bind ATP.

Belongs to the chaperonin (HSP60) family. As to quaternary structure, forms a cylinder of 14 subunits composed of two heptameric rings stacked back-to-back. Interacts with the co-chaperonin GroES.

It is found in the cytoplasm. The catalysed reaction is ATP + H2O + a folded polypeptide = ADP + phosphate + an unfolded polypeptide.. Its function is as follows. Together with its co-chaperonin GroES, plays an essential role in assisting protein folding. The GroEL-GroES system forms a nano-cage that allows encapsulation of the non-native substrate proteins and provides a physical environment optimized to promote and accelerate protein folding. The sequence is that of Chaperonin GroEL from Idiomarina loihiensis (strain ATCC BAA-735 / DSM 15497 / L2-TR).